The following is a 204-amino-acid chain: Peptide deformylase (204 aa).

Positions 131 and 174 each coordinate Fe cation. Glutamate 175 is an active-site residue. Histidine 178 serves as a coordination point for Fe cation.

It belongs to the polypeptide deformylase family. The cofactor is Fe(2+).

It carries out the reaction N-terminal N-formyl-L-methionyl-[peptide] + H2O = N-terminal L-methionyl-[peptide] + formate. Its function is as follows. Removes the formyl group from the N-terminal Met of newly synthesized proteins. Requires at least a dipeptide for an efficient rate of reaction. N-terminal L-methionine is a prerequisite for activity but the enzyme has broad specificity at other positions. The polypeptide is Peptide deformylase (Streptococcus pyogenes serotype M1).